Reading from the N-terminus, the 210-residue chain is Resolvase (210 aa).

The Resolvase/invertase-type recombinase catalytic domain occupies 6–150 (VARVYLRVSS…EDRRERQRQG (145 aa)). S14 (O-(5'-phospho-DNA)-serine intermediate) is an active-site residue. The segment at residues 191–210 (GVSVSQVKRVWAQNQTKDKV) is a DNA-binding region (H-T-H motif).

It belongs to the site-specific recombinase resolvase family.

In terms of biological role, site-specific recombination protein. The sequence is that of Resolvase (stbA) from Pseudomonas syringae pv. tomato.